Consider the following 740-residue polypeptide: Gramillins biosynthetic cluster protein FGSG_11657 (740 aa).

Disordered regions lie at residues 353–391 (QADS…SSIP), 414–434 (SKLS…DAAS), 514–535 (PKEQ…GSSD), and 656–686 (EHEG…PQGD). The segment covering 656–667 (EHEGEGRADTNR) has biased composition (basic and acidic residues). Over residues 668–682 (HVSTQSNMPTEQSLL) the composition is skewed to polar residues.

Its pathway is mycotoxin biosynthesis. Functionally, part of the gene cluster that mediates the biosynthesis of gramillins A and B, bicyclic lipopeptides that induce cell death in maize leaves but not in wheat leaves. The nonribosomal peptide synthetase GRA1 incorporates respectively a glutamic adic (Glu), a leucine (Leu), a serine (Ser), a hydroxyglutamine (HOGln), a 2-amino decanoic acid, and 2 cysteins (CysB and CysA). The biosynthesis of 2-amino decanoic acid incorporated in gramillins could be initiated by a fatty acid synthase composed of the alpha and beta subunits FGSG_00036 and FGSG_11656. The cytochrome P450 monooxygenase FGSG_15680 could hydroxylate the fatty acid chain. Subsequent oxidation to the ketone by the oxidoreductase FGSG_00048 and transamination by aminotransferase FGSG_00049 could form 2-amino-decanoic acid. On the other hand, FGSG_15680 could also be responsible for the HO-modified glutamine at the gamma-position. Whether hydroxylation occurs on the fully assembled product or on the Gln residue prior to assembly into the gramillins requires further proof. The thioredoxin FGSG_00043 could also be required for the disulfide-bond formation between CysA and CysB. The specific involvement of the remaining proteins from the cluster is more difficult to discern, but could have broader regulatory (FGSG_00040 and FGSG_11657) or enzymatic functions (FGSG_00044 and FGSG_00045). The final C-domain of GRA1 does not possess the expected sequence of a termination CT domain, often implicated in macrocyclization and release of a cyclopeptidein fungal NRPs; and the thioesterase FGSG_00047 may act in concert with the terminal C-domain of GRA1 to catalyze the formation of the macrocyclic anhydride and release of the products. This is Gramillins biosynthetic cluster protein FGSG_11657 from Gibberella zeae (strain ATCC MYA-4620 / CBS 123657 / FGSC 9075 / NRRL 31084 / PH-1) (Wheat head blight fungus).